Reading from the N-terminus, the 530-residue chain is Arginine--tRNA ligase (530 aa).

The 'HIGH' region motif lies at 113–123 (ANPTGPLHIGH).

It belongs to the class-I aminoacyl-tRNA synthetase family. Monomer.

The protein resides in the cytoplasm. It carries out the reaction tRNA(Arg) + L-arginine + ATP = L-arginyl-tRNA(Arg) + AMP + diphosphate. This Campylobacter jejuni subsp. jejuni serotype O:2 (strain ATCC 700819 / NCTC 11168) protein is Arginine--tRNA ligase.